Consider the following 356-residue polypeptide: Heat-inducible transcription repressor HrcA (356 aa).

Belongs to the HrcA family.

In terms of biological role, negative regulator of class I heat shock genes (grpE-dnaK-dnaJ and groELS operons). Prevents heat-shock induction of these operons. In Bartonella henselae (strain ATCC 49882 / DSM 28221 / CCUG 30454 / Houston 1) (Rochalimaea henselae), this protein is Heat-inducible transcription repressor HrcA.